The following is a 159-amino-acid chain: ATP synthase subunit b 2 (159 aa).

A helical membrane pass occupies residues methionine 1–leucine 21.

Belongs to the ATPase B chain family. F-type ATPases have 2 components, F(1) - the catalytic core - and F(0) - the membrane proton channel. F(1) has five subunits: alpha(3), beta(3), gamma(1), delta(1), epsilon(1). F(0) has three main subunits: a(1), b(2) and c(10-14). The alpha and beta chains form an alternating ring which encloses part of the gamma chain. F(1) is attached to F(0) by a central stalk formed by the gamma and epsilon chains, while a peripheral stalk is formed by the delta and b chains.

The protein resides in the cell inner membrane. In terms of biological role, f(1)F(0) ATP synthase produces ATP from ADP in the presence of a proton or sodium gradient. F-type ATPases consist of two structural domains, F(1) containing the extramembraneous catalytic core and F(0) containing the membrane proton channel, linked together by a central stalk and a peripheral stalk. During catalysis, ATP synthesis in the catalytic domain of F(1) is coupled via a rotary mechanism of the central stalk subunits to proton translocation. Functionally, component of the F(0) channel, it forms part of the peripheral stalk, linking F(1) to F(0). The protein is ATP synthase subunit b 2 of Brucella anthropi (strain ATCC 49188 / DSM 6882 / CCUG 24695 / JCM 21032 / LMG 3331 / NBRC 15819 / NCTC 12168 / Alc 37) (Ochrobactrum anthropi).